We begin with the raw amino-acid sequence, 286 residues long: NADPH-dependent 7-cyano-7-deazaguanine reductase (286 aa).

Ile-92–Ser-94 is a substrate binding site. An NADPH-binding site is contributed by Ser-94–Lys-95. The active-site Thioimide intermediate is Cys-194. The active-site Proton donor is the Asp-201. Position 233-234 (His-233–Glu-234) interacts with substrate. NADPH is bound at residue Arg-262–Gly-263.

The protein belongs to the GTP cyclohydrolase I family. QueF type 2 subfamily. As to quaternary structure, homodimer.

The protein localises to the cytoplasm. It carries out the reaction 7-aminomethyl-7-carbaguanine + 2 NADP(+) = 7-cyano-7-deazaguanine + 2 NADPH + 3 H(+). It functions in the pathway tRNA modification; tRNA-queuosine biosynthesis. Functionally, catalyzes the NADPH-dependent reduction of 7-cyano-7-deazaguanine (preQ0) to 7-aminomethyl-7-deazaguanine (preQ1). The sequence is that of NADPH-dependent 7-cyano-7-deazaguanine reductase from Shewanella oneidensis (strain ATCC 700550 / JCM 31522 / CIP 106686 / LMG 19005 / NCIMB 14063 / MR-1).